The following is a 155-amino-acid chain: Ribonuclease H (155 aa).

The 142-residue stretch at 1-142 (MLKQVEIFTD…CDELARAAAM (142 aa)) folds into the RNase H type-1 domain. Residues aspartate 10, glutamate 48, aspartate 70, and aspartate 134 each contribute to the Mg(2+) site.

This sequence belongs to the RNase H family. In terms of assembly, monomer. Mg(2+) serves as cofactor.

The protein resides in the cytoplasm. The enzyme catalyses Endonucleolytic cleavage to 5'-phosphomonoester.. Functionally, endonuclease that specifically degrades the RNA of RNA-DNA hybrids. This Salmonella paratyphi C (strain RKS4594) protein is Ribonuclease H.